The chain runs to 126 residues: Alpha-lactalbumin (126 aa).

In terms of domain architecture, C-type lysozyme spans Arg-1–Cys-126. Cystine bridges form between Cys-6–Cys-126, Cys-30–Cys-117, Cys-63–Cys-82, and Cys-78–Cys-96. A glycan (N-linked (GlcNAc...) asparagine) is linked at Asn-47. Residues Lys-84, Asp-87, Asp-89, Asp-92, and Asp-93 each coordinate Ca(2+).

Belongs to the glycosyl hydrolase 22 family. In terms of assembly, lactose synthase (LS) is a heterodimer of a catalytic component, beta1,4-galactosyltransferase (beta4Gal-T1) and a regulatory component, alpha-lactalbumin (LA). In terms of tissue distribution, mammary gland specific. Secreted in milk.

It is found in the secreted. In terms of biological role, regulatory subunit of lactose synthase, changes the substrate specificity of galactosyltransferase in the mammary gland making glucose a good acceptor substrate for this enzyme. This enables LS to synthesize lactose, the major carbohydrate component of milk. In other tissues, galactosyltransferase transfers galactose onto the N-acetylglucosamine of the oligosaccharide chains in glycoproteins. The protein is Alpha-lactalbumin (LALBA) of Ornithorhynchus anatinus (Duckbill platypus).